The following is a 130-amino-acid chain: Mitochondrial pyruvate carrier 1 (130 aa).

2 consecutive transmembrane segments (helical) span residues 23–45 (LKYI…IAAI) and 55–77 (ISGP…ALSV).

The protein belongs to the mitochondrial pyruvate carrier (MPC) (TC 2.A.105) family. As to quaternary structure, the functional 150 kDa pyruvate import complex is a heteromer of MPC1 and either MPC2 or MPC3.

It localises to the mitochondrion. It is found in the mitochondrion inner membrane. Its function is as follows. Mediates the uptake of pyruvate into mitochondria. This Saccharomyces cerevisiae (strain ATCC 204508 / S288c) (Baker's yeast) protein is Mitochondrial pyruvate carrier 1.